Consider the following 469-residue polypeptide: Spliceosome-associated protein CWC27 homolog (469 aa).

Residue Ser2 is modified to N-acetylserine. Positions 11 to 166 (TNGKVLLKTT…NPHRIKSCEV (156 aa)) constitute a PPIase cyclophilin-type domain. Over residues 175–193 (TPREIKKPKNEKPEEEVKK) the composition is skewed to basic and acidic residues. 2 disordered regions span residues 175 to 415 (TPRE…DDEG) and 428 to 469 (RKVK…KERR). Positions 206–229 (SFGEEAEEEEEEVNRVSQSMKGRS) form a coiled coil. Residues 231-241 (SSHDLLKDDPH) are compositionally biased toward basic and acidic residues. Acidic residues predominate over residues 256-278 (TGDLEDDGEDDSAERDEYMEDDE). Basic and acidic residues-rich tracts occupy residues 302 to 341 (GDGE…KVEE) and 356 to 368 (EYRR…EALR). The stretch at 309-371 (ASRSEELRKE…QKYEALRKQQ (63 aa)) forms a coiled coil. Residues 384–403 (ALLSQFKSKLTQAITETPEN) are compositionally biased toward polar residues. The span at 454 to 469 (RREESKKLLREKKERR) shows a compositional bias: basic and acidic residues.

This sequence belongs to the cyclophilin-type PPIase family. As to quaternary structure, part of the activated spliceosome B/catalytic step 1 spliceosome, one of the forms of the spliceosome which has a well-formed active site but still cannot catalyze the branching reaction and is composed at least of 52 proteins, the U2, U5 and U6 snRNAs and the pre-mRNA. Recruited during early steps of activated spliceosome B maturation, it is probably one of the first proteins released from this complex as he matures to the spliceosome C complex. Component of the minor spliceosome, which splices U12-type introns.

It localises to the nucleus. As part of the spliceosome, plays a role in pre-mRNA splicing. Probable inactive PPIase with no peptidyl-prolyl cis-trans isomerase activity. As a component of the minor spliceosome, involved in the splicing of U12-type introns in pre-mRNAs. The sequence is that of Spliceosome-associated protein CWC27 homolog from Mus musculus (Mouse).